A 267-amino-acid chain; its full sequence is Tryptophan synthase alpha chain (267 aa).

Catalysis depends on proton acceptor residues Glu49 and Asp60.

The protein belongs to the TrpA family. In terms of assembly, tetramer of two alpha and two beta chains.

It carries out the reaction (1S,2R)-1-C-(indol-3-yl)glycerol 3-phosphate + L-serine = D-glyceraldehyde 3-phosphate + L-tryptophan + H2O. Its pathway is amino-acid biosynthesis; L-tryptophan biosynthesis; L-tryptophan from chorismate: step 5/5. Functionally, the alpha subunit is responsible for the aldol cleavage of indoleglycerol phosphate to indole and glyceraldehyde 3-phosphate. The polypeptide is Tryptophan synthase alpha chain (Acidothermus cellulolyticus (strain ATCC 43068 / DSM 8971 / 11B)).